The primary structure comprises 367 residues: NADH-quinone oxidoreductase subunit H (367 aa).

The next 8 helical transmembrane spans lie at 18 to 38, 87 to 107, 132 to 152, 180 to 200, 204 to 224, 257 to 277, 291 to 311, and 328 to 348; these read VLLF…VAYL, LCFL…WAVI, IGVL…IIAG, LTIV…IVIA, MPYW…ISAL, FFLG…IFFF, IIPG…CFIW, and GWKV…GILV.

It belongs to the complex I subunit 1 family. NDH-1 is composed of 14 different subunits. Subunits NuoA, H, J, K, L, M, N constitute the membrane sector of the complex.

Its subcellular location is the cell inner membrane. The catalysed reaction is a quinone + NADH + 5 H(+)(in) = a quinol + NAD(+) + 4 H(+)(out). In terms of biological role, NDH-1 shuttles electrons from NADH, via FMN and iron-sulfur (Fe-S) centers, to quinones in the respiratory chain. The immediate electron acceptor for the enzyme in this species is believed to be ubiquinone. Couples the redox reaction to proton translocation (for every two electrons transferred, four hydrogen ions are translocated across the cytoplasmic membrane), and thus conserves the redox energy in a proton gradient. This subunit may bind ubiquinone. This Ehrlichia ruminantium (strain Gardel) protein is NADH-quinone oxidoreductase subunit H.